Consider the following 430-residue polypeptide: Glutamate-1-semialdehyde 2,1-aminomutase (430 aa).

At Lys265 the chain carries N6-(pyridoxal phosphate)lysine.

This sequence belongs to the class-III pyridoxal-phosphate-dependent aminotransferase family. HemL subfamily. As to quaternary structure, homodimer. Pyridoxal 5'-phosphate is required as a cofactor.

It is found in the cytoplasm. It carries out the reaction (S)-4-amino-5-oxopentanoate = 5-aminolevulinate. The protein operates within porphyrin-containing compound metabolism; protoporphyrin-IX biosynthesis; 5-aminolevulinate from L-glutamyl-tRNA(Glu): step 2/2. The sequence is that of Glutamate-1-semialdehyde 2,1-aminomutase from Helicobacter pylori (strain HPAG1).